A 430-amino-acid polypeptide reads, in one-letter code: Enolase (430 aa).

Residue Gln-165 participates in (2R)-2-phosphoglycerate binding. The active-site Proton donor is the Glu-207. Mg(2+)-binding residues include Asp-244, Glu-287, and Asp-314. (2R)-2-phosphoglycerate-binding residues include Lys-339, Arg-368, Ser-369, and Lys-390. The active-site Proton acceptor is Lys-339.

Belongs to the enolase family. Component of the RNA degradosome, a multiprotein complex involved in RNA processing and mRNA degradation. Mg(2+) is required as a cofactor.

The protein localises to the cytoplasm. It is found in the secreted. Its subcellular location is the cell surface. The catalysed reaction is (2R)-2-phosphoglycerate = phosphoenolpyruvate + H2O. Its pathway is carbohydrate degradation; glycolysis; pyruvate from D-glyceraldehyde 3-phosphate: step 4/5. In terms of biological role, catalyzes the reversible conversion of 2-phosphoglycerate (2-PG) into phosphoenolpyruvate (PEP). It is essential for the degradation of carbohydrates via glycolysis. The protein is Enolase of Stenotrophomonas maltophilia (strain K279a).